The following is a 347-amino-acid chain: Ferrochelatase (347 aa).

Fe cation is bound by residues histidine 193 and glutamate 273.

It belongs to the ferrochelatase family.

The protein resides in the cytoplasm. It catalyses the reaction heme b + 2 H(+) = protoporphyrin IX + Fe(2+). It functions in the pathway porphyrin-containing compound metabolism; protoheme biosynthesis; protoheme from protoporphyrin-IX: step 1/1. Its function is as follows. Catalyzes the ferrous insertion into protoporphyrin IX. The protein is Ferrochelatase of Rickettsia canadensis (strain McKiel).